The chain runs to 85 residues: Large ribosomal subunit protein bL31B (85 aa).

The protein belongs to the bacterial ribosomal protein bL31 family. Type B subfamily. Part of the 50S ribosomal subunit.

The polypeptide is Large ribosomal subunit protein bL31B (Bifidobacterium longum subsp. infantis (strain ATCC 15697 / DSM 20088 / JCM 1222 / NCTC 11817 / S12)).